We begin with the raw amino-acid sequence, 276 residues long: NH(3)-dependent NAD(+) synthetase (276 aa).

Residue 43-50 (GISGGVDS) coordinates ATP. D49 serves as a coordination point for Mg(2+). R146 contributes to the deamido-NAD(+) binding site. Position 166 (T166) interacts with ATP. E171 lines the Mg(2+) pocket. Deamido-NAD(+) contacts are provided by K179 and D186. The ATP site is built by K195 and T217. 266–267 (HK) is a deamido-NAD(+) binding site.

This sequence belongs to the NAD synthetase family. Homodimer.

It carries out the reaction deamido-NAD(+) + NH4(+) + ATP = AMP + diphosphate + NAD(+) + H(+). The protein operates within cofactor biosynthesis; NAD(+) biosynthesis; NAD(+) from deamido-NAD(+) (ammonia route): step 1/1. Functionally, catalyzes the ATP-dependent amidation of deamido-NAD to form NAD. Uses ammonia as a nitrogen source. This Vibrio vulnificus (strain YJ016) protein is NH(3)-dependent NAD(+) synthetase.